The following is a 147-amino-acid chain: Hemoglobin subunit beta (147 aa).

Val-2 carries the N-acetylvaline modification. The 145-residue stretch at 3–147 folds into the Globin domain; the sequence is HLTAEEKAAV…VATALAHKYH (145 aa). Thr-13 bears the Phosphothreonine mark. Residue Ser-45 is modified to Phosphoserine. An N6-acetyllysine modification is found at Lys-60. A heme b-binding site is contributed by His-64. The residue at position 83 (Lys-83) is an N6-acetyllysine. A heme b-binding site is contributed by His-93. Position 94 is an S-nitrosocysteine (Cys-94). N6-acetyllysine is present on Lys-145.

Belongs to the globin family. Heterotetramer of two alpha chains and two beta chains. Red blood cells.

In terms of biological role, involved in oxygen transport from the lung to the various peripheral tissues. In Carlito syrichta (Philippine tarsier), this protein is Hemoglobin subunit beta (HBB).